The following is a 313-amino-acid chain: MHNVPIEYSDEVQNALSNGLPILGLESNVLSHGLPYPRNLEMFNACDEIIRSNGVVPALTFIRDKRICIGASPKDVELLTDDPKPIKVSARDIALCIAQGKVGATTASASIAICELAGIRIFSTAGLGGVHRDFSETLDVSADLHEISSRKTIVVSAGVKKFLDIPKTSEVLESLGVPVVGFGTSEFPAFYCRKSGAFLESFSQDPIEIATAAATHIETVGPGGFLILVAPSKEIALDDELVEKAVQRSLINASSQGVRGKAITKFVMRAIDSETDNRSQTANFDVMVEVVNAAAQIARSLKPEFFLDSVAKK.

The active-site Proton donor is the E26. Substrate is bound by residues K87 and A107. A Mn(2+)-binding site is contributed by D139. A substrate-binding site is contributed by 141–143 (SAD). K160 serves as the catalytic Nucleophile.

The protein belongs to the pseudouridine-5'-phosphate glycosidase family. As to quaternary structure, homotrimer. Mn(2+) is required as a cofactor.

The catalysed reaction is D-ribose 5-phosphate + uracil = psi-UMP + H2O. Catalyzes the reversible cleavage of pseudouridine 5'-phosphate (PsiMP) to ribose 5-phosphate and uracil. Functions biologically in the cleavage direction, as part of a pseudouridine degradation pathway. This Corynebacterium aurimucosum (strain ATCC 700975 / DSM 44827 / CIP 107346 / CN-1) (Corynebacterium nigricans) protein is Pseudouridine-5'-phosphate glycosidase.